Here is a 169-residue protein sequence, read N- to C-terminus: GTP-dependent dephospho-CoA kinase (169 aa).

3 residues coordinate GTP: aspartate 45, aspartate 64, and glutamate 121.

This sequence belongs to the GTP-dependent DPCK family.

It carries out the reaction 3'-dephospho-CoA + GTP = GDP + CoA + H(+). Its pathway is cofactor biosynthesis; coenzyme A biosynthesis. In terms of biological role, catalyzes the GTP-dependent phosphorylation of the 3'-hydroxyl group of dephosphocoenzyme A to form coenzyme A (CoA). The polypeptide is GTP-dependent dephospho-CoA kinase (Methanobrevibacter smithii (strain ATCC 35061 / DSM 861 / OCM 144 / PS)).